A 398-amino-acid chain; its full sequence is Thyrotropin-releasing hormone receptor (398 aa).

The Extracellular portion of the chain corresponds to 1-28 (MENETVSELNQTQLQPRAVVALEYQVVT). 2 N-linked (GlcNAc...) asparagine glycosylation sites follow: Asn3 and Asn10. The helical transmembrane segment at 29 to 51 (ILLVLIICGLGIVGNIMVVLVVM) threads the bilayer. At 52–61 (RTKHMRTPTN) the chain is on the cytoplasmic side. Residues 62 to 83 (CYLVSLAVADLMVLVAAGLPNI) traverse the membrane as a helical segment. The Extracellular segment spans residues 84–99 (TDSIYGSWVYGYVGCL). Cys98 and Cys179 are oxidised to a cystine. The helical transmembrane segment at 100-121 (CITYLQYLGINASSCSITAFTI) threads the bilayer. The Cytoplasmic portion of the chain corresponds to 122 to 144 (ERYIAICHPIKAQFLCTFSRAKK). A helical transmembrane segment spans residues 145-168 (IIIFVWAFTSLYCMLWFFLLDLNI). At 169–193 (STYKDAIVISCGYKISRNYYSPIYL) the chain is on the extracellular side. A helical membrane pass occupies residues 194 to 215 (MDFGVFYVVPMILATVLYGFIA). Over 216-266 (RILFLNPIPSDPKENSKTWKNDSTHQNTNLNVNTSNRCFNSTVSSRKQVTK) the chain is Cytoplasmic. The helical transmembrane segment at 267–288 (MLAVVVILFALLWMPYRTLVVV) threads the bilayer. The Extracellular segment spans residues 289–296 (NSFLSSPF). A helical membrane pass occupies residues 297 to 319 (QENWFLLFCRICIYLNSAINPVI). Topologically, residues 320 to 398 (YNLMSQKFRA…LASEVSFSQS (79 aa)) are cytoplasmic.

This sequence belongs to the G-protein coupled receptor 1 family.

It localises to the cell membrane. Its function is as follows. Receptor for thyrotropin-releasing hormone (TRH). Upon ligand binding, this G-protein-coupled receptor triggers activation of the phosphatidylinositol (IP3)-calcium-protein kinase C (PKC) pathway. This chain is Thyrotropin-releasing hormone receptor (TRHR), found in Homo sapiens (Human).